The sequence spans 139 residues: uncharacterized protein (139 aa).

The 62-residue stretch at Met1 to His62 folds into the HTH asnC-type domain. The H-T-H motif DNA-binding region spans Met20 to Arg39.

This is an uncharacterized protein from Bacillus subtilis (strain 168).